Reading from the N-terminus, the 178-residue chain is ATP-dependent protease subunit HslV (178 aa).

Residue threonine 7 is part of the active site. Na(+) contacts are provided by glycine 162, cysteine 165, and threonine 168.

It belongs to the peptidase T1B family. HslV subfamily. In terms of assembly, a double ring-shaped homohexamer of HslV is capped on each side by a ring-shaped HslU homohexamer. The assembly of the HslU/HslV complex is dependent on binding of ATP.

The protein localises to the cytoplasm. It catalyses the reaction ATP-dependent cleavage of peptide bonds with broad specificity.. Allosterically activated by HslU binding. Functionally, protease subunit of a proteasome-like degradation complex believed to be a general protein degrading machinery. The protein is ATP-dependent protease subunit HslV of Herminiimonas arsenicoxydans.